Here is a 237-residue protein sequence, read N- to C-terminus: Phosphoribosylaminoimidazole-succinocarboxamide synthase (237 aa).

Belongs to the SAICAR synthetase family.

It carries out the reaction 5-amino-1-(5-phospho-D-ribosyl)imidazole-4-carboxylate + L-aspartate + ATP = (2S)-2-[5-amino-1-(5-phospho-beta-D-ribosyl)imidazole-4-carboxamido]succinate + ADP + phosphate + 2 H(+). It functions in the pathway purine metabolism; IMP biosynthesis via de novo pathway; 5-amino-1-(5-phospho-D-ribosyl)imidazole-4-carboxamide from 5-amino-1-(5-phospho-D-ribosyl)imidazole-4-carboxylate: step 1/2. The polypeptide is Phosphoribosylaminoimidazole-succinocarboxamide synthase (Idiomarina loihiensis (strain ATCC BAA-735 / DSM 15497 / L2-TR)).